A 227-amino-acid polypeptide reads, in one-letter code: Urease accessory protein UreF (227 aa).

Belongs to the UreF family. In terms of assembly, ureD, UreF and UreG form a complex that acts as a GTP-hydrolysis-dependent molecular chaperone, activating the urease apoprotein by helping to assemble the nickel containing metallocenter of UreC. The UreE protein probably delivers the nickel.

It localises to the cytoplasm. Required for maturation of urease via the functional incorporation of the urease nickel metallocenter. The chain is Urease accessory protein UreF from Blochmanniella floridana.